We begin with the raw amino-acid sequence, 477 residues long: Proline--tRNA ligase (477 aa).

This sequence belongs to the class-II aminoacyl-tRNA synthetase family. ProS type 3 subfamily. As to quaternary structure, homodimer.

The protein resides in the cytoplasm. It carries out the reaction tRNA(Pro) + L-proline + ATP = L-prolyl-tRNA(Pro) + AMP + diphosphate. Functionally, catalyzes the attachment of proline to tRNA(Pro) in a two-step reaction: proline is first activated by ATP to form Pro-AMP and then transferred to the acceptor end of tRNA(Pro). In Lachnoclostridium phytofermentans (strain ATCC 700394 / DSM 18823 / ISDg) (Clostridium phytofermentans), this protein is Proline--tRNA ligase.